The sequence spans 71 residues: Brevinin-1SN1 (71 aa).

Positions 1–22 (MFTMKKPLLLLFFLGTINLSLC) are cleaved as a signal peptide. A propeptide spans 23 to 45 (EEERNADEEEKRDGDDEMDAEVE) (removed in mature form). Cys-65 and Cys-71 form a disulfide bridge.

The protein belongs to the frog skin active peptide (FSAP) family. Brevinin subfamily. Expressed by the skin glands.

The protein localises to the secreted. Antimicrobial peptide. Active against some Gram-negative and a variety of Gram-positive bacterial strains. Active against fungus C.glabrata 090902 but not against C.albicans ATCC 10231. Shows hemolytic activity against human erythrocytes. This Sylvirana spinulosa (Fine-spined frog) protein is Brevinin-1SN1.